Here is a 344-residue protein sequence, read N- to C-terminus: Small ribosomal subunit biogenesis GTPase RsgA (344 aa).

A CP-type G domain is found at 100-268; that stretch reads KNELSRPDYY…LIDSPGIREF (169 aa). Residues 156-159 and 210-218 contribute to the GTP site; these read NKID and GQSGVGKSS. The Zn(2+) site is built by Cys292, Cys297, His299, and Cys305.

It belongs to the TRAFAC class YlqF/YawG GTPase family. RsgA subfamily. In terms of assembly, monomer. Associates with 30S ribosomal subunit, binds 16S rRNA. Zn(2+) is required as a cofactor.

Its subcellular location is the cytoplasm. In terms of biological role, one of several proteins that assist in the late maturation steps of the functional core of the 30S ribosomal subunit. Helps release RbfA from mature subunits. May play a role in the assembly of ribosomal proteins into the subunit. Circularly permuted GTPase that catalyzes slow GTP hydrolysis, GTPase activity is stimulated by the 30S ribosomal subunit. The sequence is that of Small ribosomal subunit biogenesis GTPase RsgA from Actinobacillus pleuropneumoniae serotype 5b (strain L20).